A 235-amino-acid polypeptide reads, in one-letter code: Orotidine 5'-phosphate decarboxylase (235 aa).

Substrate is bound by residues Asp-17, Lys-39, 66-75, Thr-121, Arg-182, Gln-191, and Arg-212; that span reads DMKLLDIDHT. The active-site Proton donor is Lys-68.

The protein belongs to the OMP decarboxylase family. Type 1 subfamily. In terms of assembly, homodimer.

The enzyme catalyses orotidine 5'-phosphate + H(+) = UMP + CO2. The protein operates within pyrimidine metabolism; UMP biosynthesis via de novo pathway; UMP from orotate: step 2/2. Catalyzes the decarboxylation of orotidine 5'-monophosphate (OMP) to uridine 5'-monophosphate (UMP). The protein is Orotidine 5'-phosphate decarboxylase of Bartonella bacilliformis.